A 622-amino-acid polypeptide reads, in one-letter code: 1-deoxy-D-xylulose-5-phosphate synthase (622 aa).

Residues His-80 and 121–123 (GHS) each bind thiamine diphosphate. Asp-152 is a Mg(2+) binding site. Residues 153-154 (GA), Asn-181, Tyr-288, and Glu-370 contribute to the thiamine diphosphate site. Asn-181 lines the Mg(2+) pocket.

This sequence belongs to the transketolase family. DXPS subfamily. As to quaternary structure, homodimer. Requires Mg(2+) as cofactor. Thiamine diphosphate is required as a cofactor.

It catalyses the reaction D-glyceraldehyde 3-phosphate + pyruvate + H(+) = 1-deoxy-D-xylulose 5-phosphate + CO2. Its pathway is metabolic intermediate biosynthesis; 1-deoxy-D-xylulose 5-phosphate biosynthesis; 1-deoxy-D-xylulose 5-phosphate from D-glyceraldehyde 3-phosphate and pyruvate: step 1/1. Its function is as follows. Catalyzes the acyloin condensation reaction between C atoms 2 and 3 of pyruvate and glyceraldehyde 3-phosphate to yield 1-deoxy-D-xylulose-5-phosphate (DXP). This chain is 1-deoxy-D-xylulose-5-phosphate synthase, found in Shewanella putrefaciens (strain CN-32 / ATCC BAA-453).